The following is a 500-amino-acid chain: NAD(P)H-quinone oxidoreductase chain 4, chloroplastic (500 aa).

The next 14 helical transmembrane spans lie at 4–24, 37–57, 87–107, 113–130, 134–154, 167–187, 211–231, 242–262, 272–292, 305–325, 330–350, 386–406, 416–436, and 462–482; these read FPWLTIIVVFPISAGLSIFFL, ICICLLELLLMTYVFCYHFQL, IGPILLTGFITTLATLAAWPV, LFHFLMLAMYSGQIGLFS, LLLFFLMWELELIPVYLLLSM, FILYTAGGSVFLLMGVLGMGL, ILFYFGFLIAYAVKLPIIPLH, HYSTCMLLAGILLKMGAYGLV, AHSIFSPWLVLAGTLQIIYAA, IAYSSVSHMGFTIIGIGSITD, GAILQLLSHGFLGAALFFLAG, LALPGMSGFVAEAVVFFGIIT, ILITFVMAIGMILTPIYLLSM, and LFVSICIFLPVIGIGIYPDFV.

It belongs to the complex I subunit 4 family.

Its subcellular location is the plastid. The protein localises to the chloroplast thylakoid membrane. The enzyme catalyses a plastoquinone + NADH + (n+1) H(+)(in) = a plastoquinol + NAD(+) + n H(+)(out). The catalysed reaction is a plastoquinone + NADPH + (n+1) H(+)(in) = a plastoquinol + NADP(+) + n H(+)(out). This chain is NAD(P)H-quinone oxidoreductase chain 4, chloroplastic, found in Acorus calamus var. americanus (American sweet flag).